A 321-amino-acid chain; its full sequence is Manganese-dependent ADP-ribose/CDP-alcohol diphosphatase (321 aa).

Positions 25, 27, 72, 107, 226, 263, and 265 each coordinate Zn(2+).

The protein belongs to the ADPRibase-Mn family. In terms of assembly, monomer. The cofactor is Mg(2+).

It carries out the reaction CDP-choline + H2O = phosphocholine + CMP + 2 H(+). It catalyses the reaction ADP-D-ribose + H2O = D-ribose 5-phosphate + AMP + 2 H(+). The enzyme catalyses CDP-glycerol + H2O = sn-glycerol 3-phosphate + CMP + 2 H(+). Hydrolyzes ADP-ribose, IDP-ribose, CDP-glycerol, CDP-choline and CDP-ethanolamine, but not other non-reducing ADP-sugars or CDP-glucose. The sequence is that of Manganese-dependent ADP-ribose/CDP-alcohol diphosphatase from Oryza sativa subsp. japonica (Rice).